The following is a 273-amino-acid chain: ATP synthase subunit a (273 aa).

The next 5 membrane-spanning stretches (helical) occupy residues 44-64 (WHID…WLFY), 104-124 (IAPL…MDLI), 149-169 (DLNV…FYSI), 223-243 (LIFI…SVPW), and 244-264 (AIFH…LTIV).

It belongs to the ATPase A chain family. As to quaternary structure, F-type ATPases have 2 components, CF(1) - the catalytic core - and CF(0) - the membrane proton channel. CF(1) has five subunits: alpha(3), beta(3), gamma(1), delta(1), epsilon(1). CF(0) has three main subunits: a(1), b(2) and c(9-12). The alpha and beta chains form an alternating ring which encloses part of the gamma chain. CF(1) is attached to CF(0) by a central stalk formed by the gamma and epsilon chains, while a peripheral stalk is formed by the delta and b chains.

It localises to the cell inner membrane. In terms of biological role, key component of the proton channel; it plays a direct role in the translocation of protons across the membrane. The chain is ATP synthase subunit a from Shewanella putrefaciens (strain CN-32 / ATCC BAA-453).